A 279-amino-acid chain; its full sequence is MTIPRIPRQLYGIIGYPLGHSMSPLLHNWGFELLGEQAAYMAFPVAPEKLAEFICCARMLPVSGLSVTIPHKQAVMPLLDAVTPRAQAAGAVNTLFYDDGKLTGDNTDVYGFLHPLDSCGTAHAAALVLGAGGAANAVLAALTARGMCNVTVTNRNGDRARILAERFGVRCVAWEERHAVDADLVVNTTPLGMAGDRQAQTPLDPAFFSSRPAGLAYDLIYNPAQTFFLASAQAAGWRVLNGLDMFVAQGAEQFRIWRGRELPFAQARALIADALASGC.

Shikimate is bound by residues 21-23 (SMS) and Thr-68. Residue Lys-72 is the Proton acceptor of the active site. Residues Asn-93 and Asp-108 each coordinate shikimate. NADP(+)-binding positions include 130–134 (GAGGA) and Leu-219. Tyr-221 lines the shikimate pocket. Gly-242 contributes to the NADP(+) binding site.

The protein belongs to the shikimate dehydrogenase family. Homodimer.

It catalyses the reaction shikimate + NADP(+) = 3-dehydroshikimate + NADPH + H(+). Its pathway is metabolic intermediate biosynthesis; chorismate biosynthesis; chorismate from D-erythrose 4-phosphate and phosphoenolpyruvate: step 4/7. Its function is as follows. Involved in the biosynthesis of the chorismate, which leads to the biosynthesis of aromatic amino acids. Catalyzes the reversible NADPH linked reduction of 3-dehydroshikimate (DHSA) to yield shikimate (SA). In Oleidesulfovibrio alaskensis (strain ATCC BAA-1058 / DSM 17464 / G20) (Desulfovibrio alaskensis), this protein is Shikimate dehydrogenase (NADP(+)).